Consider the following 52-residue polypeptide: Alpha-crystallin B chain (52 aa).

It belongs to the small heat shock protein (HSP20) family. As to quaternary structure, homodimer. Aggregates with homologous proteins, including alpha-A-crystallin and the small heat shock protein HSPB1, to form large heteromeric complexes.

Functionally, may contribute to the transparency and refractive index of the lens. The chain is Alpha-crystallin B chain (CRYAB) from Eudromia elegans (Elegant crested-tinamou).